We begin with the raw amino-acid sequence, 161 residues long: Endoribonuclease YbeY (161 aa).

Residues histidine 121, histidine 125, and histidine 131 each contribute to the Zn(2+) site.

Belongs to the endoribonuclease YbeY family. The cofactor is Zn(2+).

The protein localises to the cytoplasm. Functionally, single strand-specific metallo-endoribonuclease involved in late-stage 70S ribosome quality control and in maturation of the 3' terminus of the 16S rRNA. The sequence is that of Endoribonuclease YbeY from Stenotrophomonas maltophilia (strain R551-3).